We begin with the raw amino-acid sequence, 284 residues long: MLQRVSRRFPSLRRCGLRTASTVPTNQAQPGEVEEEVSATVKRIRSELAADKQKLKWRTPIGDRPEDWNSKLKLFSNAEQTSDFIVMMQKPIDLSPRNIRQWWENREERIERHMQQFVPERHKILGAELAAAHFILYRGGAVKFINDTHWRRASKDGEFKLPNKFDPRYKVEALRCDNMELYYEGLENLRCLDSLKFLSFHNVKSFDDWCLDRISGGGFPNLEVLDLSCTQITSNGLACLYRFPKLKLLILNDPKETLELELSTVMLEEAMPALKIVGADAIHS.

Belongs to the ATP synthase subunit s family. As to quaternary structure, associates with mitochondrial complex I assembly intermediates during its biogenesis.

Involved in the assembly of the mitochondrial membrane respiratory chain NADH dehydrogenase (Complex I). The polypeptide is Distal membrane arm assembly component 2 (Drosophila melanogaster (Fruit fly)).